Here is a 525-residue protein sequence, read N- to C-terminus: MKLSALHQSYLNRRSNSFRSPTSLDSSVDGSGKSLIAVFWLILHCLCCLISLVLGFRFSRLVFFFLFSTSSTNLYSLPFRPDLPVKHLDVHTIGRTLDPGANGTTVVATATKSSRVVVGRHGIRIRPWPHPNPVEVMKAHQIIGRVQKEQKMIFGMKSSKMVIAVTPTYVRTFQALHLTGVMHSLMLVPYDLVWIVVEAGGATNETGLIIAKSGLRTIHVGIDQRMPNTWEDRSKLEVFMRLQALRVVREEKLDGIVMFADDSNMHSMELFDEIQNVKWFGTVSVGILAHSGNAEEMVLSMEKRKEMEKEEEEESSSLPVQGPACNSTDQLIGWHIFNTLPYAGKSAVYIDDVAAVLPQKLEWSGFVLNSRLLWEEAENKPEWVKDFGSLNENEGVESPLSLLKDPSMVEPLGSCGRQVLLWWLRVEARADSKFPPGWIIDPPLEITVAAKRTPWPDVPPEPPTKKKDQMPLSQGNTVVVIPKQQQHPTKIRKPKRKSKKSKHEPRPTDTTTQVYSSSSKHQERN.

Over 1–35 (MKLSALHQSYLNRRSNSFRSPTSLDSSVDGSGKSL) the chain is Cytoplasmic. A helical; Signal-anchor for type II membrane protein membrane pass occupies residues 36–56 (IAVFWLILHCLCCLISLVLGF). Residues 57–525 (RFSRLVFFFL…SSSSKHQERN (469 aa)) are Lumenal-facing. Asparagine 102, asparagine 204, and asparagine 326 each carry an N-linked (GlcNAc...) asparagine glycan. Residues 452-525 (RTPWPDVPPE…SSSSKHQERN (74 aa)) are disordered. The segment covering 471–488 (PLSQGNTVVVIPKQQQHP) has biased composition (polar residues). The span at 489 to 503 (TKIRKPKRKSKKSKH) shows a compositional bias: basic residues. Over residues 508-519 (TDTTTQVYSSSS) the composition is skewed to polar residues.

The protein belongs to the glycosyltransferase 43 family. In terms of tissue distribution, expressed in developing interfascicular fibers and xylem cells in stems and developing secondary xylem in roots.

It localises to the golgi apparatus membrane. It catalyses the reaction [(1-&gt;4)-beta-D-xylan](n) + UDP-alpha-D-xylose = [(1-&gt;4)-beta-D-xylan](n+1) + UDP + H(+). Involved in the synthesis of the hemicellulose glucuronoxylan, a major component of secondary cell walls. Involved in the elongation of glucuronoxylan xylosyl backbone. Xylan xylosyltransferase that acts cooperatively with IRX9 to achieve the successive addition of xylosyl residues during xylan backbone elongation. Required for the proper composition and structural properties of released seed coat mucilage. Required for the production of highly branched xylan polymers in seed coat mucilage. Xylan with xylose side chains seems to be necessary for pectin attachment to the seed surface. Together with MUCI70, required for xylan and pectin synthesis in seed coat epidermal (SCE) cells. The protein is Beta-1,4-xylosyltransferase IRX14 of Arabidopsis thaliana (Mouse-ear cress).